The sequence spans 382 residues: GDSL esterase/lipase At4g01130 (382 aa).

An N-terminal signal peptide occupies residues 1–28 (MASDINRRRSFSLLVLIIVMLYGHKGDS). Serine 41 acts as the Nucleophile in catalysis. Asparagine 118, asparagine 263, asparagine 275, and asparagine 330 each carry an N-linked (GlcNAc...) asparagine glycan. Catalysis depends on residues aspartate 348 and histidine 351.

The protein belongs to the 'GDSL' lipolytic enzyme family.

The protein resides in the secreted. The chain is GDSL esterase/lipase At4g01130 from Arabidopsis thaliana (Mouse-ear cress).